Here is a 153-residue protein sequence, read N- to C-terminus: MAVPMDTISGPWGNNGGNFWSFRPVNKINQIVISYGGGGNNPIALTFSSTKADGSKDTITVGGGGPDSITGTEMVNIGTDEYLTGISGTFGIYLDNNVLRSITFTTNLKAHGPYGQKVGTPFSSANVVGNEIVGFLGRSGYYVDAIGTYNRHK.

Alanine 2 carries the post-translational modification N-acetylalanine. Residues 6–152 (DTISGPWGNN…VDAIGTYNRH (147 aa)) form the Jacalin-type lectin domain. N-glycan binding regions lie at residues 17–18 (GN), 95–96 (DN), and 140–144 (GYYVD).

This sequence belongs to the jacalin lectin family. As to quaternary structure, homodimer. Not glycosylated. In terms of tissue distribution, rhizome (at protein level). Detected in the cortex and the pith of rhizome. Not detected in vascular tissues, pericycle, endodermis or rhizodermis.

It localises to the cytoplasm. Hemagglutinating activity is most inhibited by methyl alpha-mannopyranoside. This activity is inhibited to a less extent (about a third of the inhibition of that of methyl alpha-mannopyranoside) by methyl alpha-glucoside, other alpha-glucosides, such as maltose, isomaltose, panose or palatinose, and alpha-glucosides modified at the second position, such as methyl 2-deoxy-alpha-arabinoglucopyranoside or methyl 2-acetamido-2-deoxy alpha-glucopyranoside. Mildly inhibited by free monosaccharides, with glucose presenting at least 20-fold less inhibitory effect on hemagglutinating activity than mannose. Glycoproteins are somewhat inhibitory, the best being asialothyroglobulin and ovomucoid. Not inhibited by isomaltitol, sucrose or trehalose. In terms of biological role, mannose-binding lectin. Preferentially binds mannose at concentrations ranging between 5 and 25 mM, but also binds glucose. Has a marked preference for methylated sugar derivatives, such as alpha-MeMan and alpha-MeGlc, at concentration down to 5 mM. Binds to N-glycans, but not to glycolipid-type or other type of glycans. Binds N-linked high-mannose-type glycans. Has a preference for smaller (Man(2)-Man(6)) high-mannose-type glycans to larger (Man(7)-Man(9)) ones. Recognizes both alpha1-6 extended and alpha1-3 extended monoantennary glycans. The addition of alpha1-2Man to the Man-alpha1-3Man-beta branch results in a significant loss of affinity, but beta1-2GlcNAc has some affinity. Has less affinity for biantennary glycans. However, affinity is significant for the biantennary complex-type N-glycans with bisecting GlcNAc. No affinity is observed for tri- and tetra-antennary glycans. Binds bisected glycans of the mouse brain. Selectively binds to bisecting N-glycans which are in back-fold conformation, and does not favor a glycan with an extend conformation. Has hemagglutinating activity against rabbit erythrocytes at 0.3 ug/ml and against trypsin-treated human erythrocytes at 5 ug/ml. Has mitogenic activity in murine cells. The protein is Jacalin-related lectin Calsepa of Calystegia sepium (Hedge bindweed).